We begin with the raw amino-acid sequence, 318 residues long: Protein LplB (318 aa).

Helical transmembrane passes span 35–55 (LIPG…GVLI), 94–114 (LMLA…LALL), 130–150 (FIYV…FVFF), 182–202 (IVMQ…LAAL), 236–256 (IIVL…EQVY), and 289–309 (AVGL…NYIA). Residues 90–305 (LRNTLMLASL…VVGIILIFGA (216 aa)) enclose the ABC transmembrane type-1 domain.

This sequence belongs to the binding-protein-dependent transport system permease family. MalFG subfamily.

The protein resides in the cell membrane. In Bacillus subtilis (strain 168), this protein is Protein LplB (lplB).